Consider the following 225-residue polypeptide: MNGIRDVVREEQPRERLLLEGAGSLSNRELLAVLLRTGSKEETVLKLSDKILHQFDGLRMLKDATLEELISIHGIGISKASQLMAAFELGRRMVRLEYQNRYSIRSPEDCAKYMMEEMRFLQQEHFVCLYLNTKNQVIHRQTIFIGSLNTSIVHPREVFKEAFRRAAASIICLHNHPSGDPTPSREDIAVTKRLVECGQIIGIEVLDHIIIGDHKFVSLKEKGHI.

The MPN domain maps to 103–225; sequence SIRSPEDCAK…FVSLKEKGHI (123 aa). Zn(2+) is bound by residues His-174, His-176, and Asp-187. Positions 174–187 match the JAMM motif motif; it reads HNHPSGDPTPSRED.

This sequence belongs to the UPF0758 family.

The sequence is that of UPF0758 protein BCB4264_A4572 from Bacillus cereus (strain B4264).